The primary structure comprises 391 residues: Succinate--CoA ligase [ADP-forming] subunit beta (391 aa).

An ATP-grasp domain is found at 9-247 (KDILAKYGVA…IAEEDPLEVE (239 aa)). Residues lysine 49, 56-58 (GRG), glutamate 102, alanine 105, and glutamate 110 contribute to the ATP site. The Mg(2+) site is built by asparagine 202 and aspartate 216. Residues asparagine 267 and 324–326 (GIL) contribute to the substrate site.

This sequence belongs to the succinate/malate CoA ligase beta subunit family. In terms of assembly, heterotetramer of two alpha and two beta subunits. Mg(2+) serves as cofactor.

It carries out the reaction succinate + ATP + CoA = succinyl-CoA + ADP + phosphate. The enzyme catalyses GTP + succinate + CoA = succinyl-CoA + GDP + phosphate. It functions in the pathway carbohydrate metabolism; tricarboxylic acid cycle; succinate from succinyl-CoA (ligase route): step 1/1. Succinyl-CoA synthetase functions in the citric acid cycle (TCA), coupling the hydrolysis of succinyl-CoA to the synthesis of either ATP or GTP and thus represents the only step of substrate-level phosphorylation in the TCA. The beta subunit provides nucleotide specificity of the enzyme and binds the substrate succinate, while the binding sites for coenzyme A and phosphate are found in the alpha subunit. The sequence is that of Succinate--CoA ligase [ADP-forming] subunit beta from Acidobacterium capsulatum (strain ATCC 51196 / DSM 11244 / BCRC 80197 / JCM 7670 / NBRC 15755 / NCIMB 13165 / 161).